Reading from the N-terminus, the 474-residue chain is Proline--tRNA ligase (474 aa).

The protein belongs to the class-II aminoacyl-tRNA synthetase family. ProS type 3 subfamily. Homodimer.

It is found in the cytoplasm. It carries out the reaction tRNA(Pro) + L-proline + ATP = L-prolyl-tRNA(Pro) + AMP + diphosphate. In terms of biological role, catalyzes the attachment of proline to tRNA(Pro) in a two-step reaction: proline is first activated by ATP to form Pro-AMP and then transferred to the acceptor end of tRNA(Pro). This chain is Proline--tRNA ligase, found in Phytoplasma australiense.